A 668-amino-acid polypeptide reads, in one-letter code: Kinesin-like protein KIF2B (668 aa).

A Phosphothreonine; by PLK1 modification is found at T125. A coiled-coil region spans residues 149–177 (CLREIEKLQKQREKRRRLQLEIRARRALD). S204 carries the phosphoserine; by PLK1 modification. Residues 213-543 (RICVCVRKRP…LRYANRVKEL (331 aa)) enclose the Kinesin motor domain. 303–310 (GQTGSGKT) contributes to the ATP binding site. Over residues 585 to 604 (PTVEKEEEKESDELTSKKEP) the composition is skewed to basic and acidic residues. The segment at 585-605 (PTVEKEEEKESDELTSKKEPA) is disordered. The stretch at 646-667 (VLTDIQKKLQSLREDLQKKSQV) forms a coiled coil.

Belongs to the TRAFAC class myosin-kinesin ATPase superfamily. Kinesin family. MCAK/KIF2 subfamily. In terms of processing, phosphorylation at Thr-125 by PLK1 is required for activity in the correction of kinetochore-microtubules attachment errors, while phosphorylation at Ser-204 also by PLK1 is required for the kinetochore localization and activity in prometaphase.

Its subcellular location is the cytoplasm. The protein resides in the cytoskeleton. It localises to the microtubule organizing center. It is found in the centrosome. The protein localises to the spindle. Its subcellular location is the chromosome. The protein resides in the centromere. It localises to the kinetochore. Functionally, plus end-directed microtubule-dependent motor required for spindle assembly and chromosome movement during mitosis. Has microtubule depolymerization activity. Plays a role in chromosome congression. In Mus musculus (Mouse), this protein is Kinesin-like protein KIF2B (Kif2b).